Consider the following 232-residue polypeptide: Large ribosomal subunit protein uL1 (232 aa).

The protein belongs to the universal ribosomal protein uL1 family. As to quaternary structure, part of the 50S ribosomal subunit.

Functionally, binds directly to 23S rRNA. The L1 stalk is quite mobile in the ribosome, and is involved in E site tRNA release. Protein L1 is also a translational repressor protein, it controls the translation of the L11 operon by binding to its mRNA. The polypeptide is Large ribosomal subunit protein uL1 (Mesorhizobium japonicum (strain LMG 29417 / CECT 9101 / MAFF 303099) (Mesorhizobium loti (strain MAFF 303099))).